The primary structure comprises 396 residues: MAATSNSGEDPTLSYHHRSPFRFELLQSISSSDPRYSSLTPSSTNRPFSVSQSLPNSQLSPLISPHWDDSYSQITQKVQKSRKNHRIQLGSIANMSGGESIDIAKVIVKQESSPQNVKRVYNKSKGGTKLLKAGKRMANGEVQNGGLNGASINCRYDSSLGLLTKKFVKLIQEAEDGTLDLNYCAVVLEVQKRRIYDITNVLEGIGLIEKTTKNHIRWKGADNLGQKDLGDQISRLKSEVESMQSEESRLDDLIRERQEALRSLEEDDYCRRYMFMTEEDITSLPRFQNQTLLAIKAPTASYIEVPDPDEMSFPQQYRMVIRSRMGPIDVYLLSKYKGDSAETSDKLGNESDQKAPVGVDTPSLKIVTSDTDLKADYWFESDAEVSLTDLWSNFNS.

Residues 34-48 (PRYSSLTPSSTNRPF) are compositionally biased toward polar residues. A disordered region spans residues 34–57 (PRYSSLTPSSTNRPFSVSQSLPNS). The DNA-binding element occupies 155–220 (RYDSSLGLLT…TTKNHIRWKG (66 aa)). Positions 226–268 (QKDLGDQISRLKSEVESMQSEESRLDDLIRERQEALRSLEEDD) form a coiled coil. Positions 236-264 (LKSEVESMQSEESRLDDLIRERQEALRSL) are leucine-zipper. The retinoblastoma protein binding stretch occupies residues 376-391 (DYWFESDAEVSLTDLW).

This sequence belongs to the E2F/DP family. In terms of assembly, heterodimer with DP proteins. Interacts preferentially with DPB, but also with DPA. No interaction with DPB when phosphorylated. Interacts with SKP2A, CDKA-1 and maize retinoblastoma-related protein RBR1. Component of a DREAM-like complex which modulates a variety of developmentally regulated genes and of the mitotic genes in proliferating and differentiated cells. Interacts with MYB3R3 at later stages of leaves development. Post-translationally, phosphorylated by cyclin-dependent kinase. Phosphorylation is necessary to target E2FC for proteolysis. Expressed in meristematic areas, vascular tissues, apical part of the roots, cotyledons, upper region of the hypocotyls, trichomes, young flower buds and pollen grains.

The protein localises to the cytoplasm. Involved in transcriptional repression. May act by repressing E2F-regulated genes in mature differentiated cells, but is not an antagonist of E2FA. Restricts cell division and is involved in the coordination between cell proliferation and endoreduplication during development. May play a role during the transition from skotomorphogenesis to photomorphogenesis. Regulated by phosphorylation-dependent proteolysis via the protein-ubiquitin ligase SCF(SKP2A) complex. The chain is Transcription factor E2FC (E2FC) from Arabidopsis thaliana (Mouse-ear cress).